The sequence spans 382 residues: MIKSALLVLEDGTQFHGRAIGATGSAVGEVVFNTSMTGYQEILTDPSYSRQIVTLTYPHIGNVGTNKADEESSQVHAQGLVIRDLPLIASNFRNTEDLSSYLKRHNIVAIADIDTRKLTRLLREKGAQNGCIIAGDSPDAKLALEKAKAFPGLNGMDLAKEVTTAETYRWTQGSWTLKDGLPEAKSEDDLPFHVVAYDFGAKRNILRMLVDRGCRLTVVPAQTSAEEVLKMNPDGIFLSNGPGDPAPCDYAITAIQKFLETDIPLFGICLGHQLLALASGAKTVKMKFGHHGGNHPVKDMDRNVVMITAQNHGFAVDEDSLPANLRVTHKSLFDGTLQGIHRTDKPAFSFQGHPEASPGPHDAAPLFDHFIELIEQYRQSAK.

The interval 1–189 (MIKSALLVLE…GLPEAKSEDD (189 aa)) is CPSase. 3 residues coordinate L-glutamine: S47, G241, and G243. A Glutamine amidotransferase type-1 domain is found at 193 to 380 (HVVAYDFGAK…IELIEQYRQS (188 aa)). The active-site Nucleophile is the C269. The L-glutamine site is built by L270, Q273, N311, G313, and F314. Active-site residues include H353 and E355.

The protein belongs to the CarA family. As to quaternary structure, composed of two chains; the small (or glutamine) chain promotes the hydrolysis of glutamine to ammonia, which is used by the large (or ammonia) chain to synthesize carbamoyl phosphate. Tetramer of heterodimers (alpha,beta)4.

The catalysed reaction is hydrogencarbonate + L-glutamine + 2 ATP + H2O = carbamoyl phosphate + L-glutamate + 2 ADP + phosphate + 2 H(+). It carries out the reaction L-glutamine + H2O = L-glutamate + NH4(+). Its pathway is amino-acid biosynthesis; L-arginine biosynthesis; carbamoyl phosphate from bicarbonate: step 1/1. It participates in pyrimidine metabolism; UMP biosynthesis via de novo pathway; (S)-dihydroorotate from bicarbonate: step 1/3. Functionally, small subunit of the glutamine-dependent carbamoyl phosphate synthetase (CPSase). CPSase catalyzes the formation of carbamoyl phosphate from the ammonia moiety of glutamine, carbonate, and phosphate donated by ATP, constituting the first step of 2 biosynthetic pathways, one leading to arginine and/or urea and the other to pyrimidine nucleotides. The small subunit (glutamine amidotransferase) binds and cleaves glutamine to supply the large subunit with the substrate ammonia. The sequence is that of Carbamoyl phosphate synthase small chain from Salmonella typhimurium (strain LT2 / SGSC1412 / ATCC 700720).